Here is a 138-residue protein sequence, read N- to C-terminus: Ribosomal RNA large subunit methyltransferase H (138 aa).

S-adenosyl-L-methionine-binding positions include Leu57, Gly86, and Leu105–Phe110.

It belongs to the RNA methyltransferase RlmH family. In terms of assembly, homodimer.

Its subcellular location is the cytoplasm. It catalyses the reaction pseudouridine(1915) in 23S rRNA + S-adenosyl-L-methionine = N(3)-methylpseudouridine(1915) in 23S rRNA + S-adenosyl-L-homocysteine + H(+). Specifically methylates the pseudouridine at position 1915 (m3Psi1915) in 23S rRNA. The polypeptide is Ribosomal RNA large subunit methyltransferase H (Prochlorococcus marinus (strain MIT 9301)).